The following is a 684-amino-acid chain: Early phosphoprotein p84 (684 aa).

5 disordered regions span residues 166 to 301 (LGGS…MSLP), 317 to 336 (SSAVSSSSNNHHHHHHHHNA), 357 to 393 (VVSSPSSTSPSSLLSLPRPSSAHSAGETVQESEAAAT), 407 to 452 (RAPA…SPRF), and 569 to 657 (SNSS…GPSF). Residues 180 to 191 (EQQRRRQEQRHE) are compositionally biased toward basic and acidic residues. Positions 201-220 (AGGGGGGGASGGGGGGGSGG) are enriched in gly residues. 2 stretches are compositionally biased toward basic and acidic residues: residues 232–245 (RDPRLMNRQKERRP) and 258–272 (REAKRQKTTAQHEGH). Positions 261-264 (KRQK) match the Nuclear localization signal motif. Over residues 285 to 296 (GGAGGGGGGGSG) the composition is skewed to gly residues. Residues 326–335 (NHHHHHHHHN) are compositionally biased toward basic residues. Positions 359 to 377 (SSPSSTSPSSLLSLPRPSS) are enriched in low complexity. The segment covering 425 to 442 (STTPVSNCRVPPNSQESA) has biased composition (polar residues). Pro residues predominate over residues 578 to 587 (PLPPPPPPPG). Residues 598 to 608 (RGGGGGGGGGR) show a composition bias toward gly residues. Over residues 612–622 (RQAASSSSSSS) the composition is skewed to low complexity.

It belongs to the herpesviridae U79/UL112 family. Isoforms 1, 2, 3 and 4 interacts with themselves and with each other via their shared N-terminal regions; these interactions are important to both their intranuclear targeting and the recruitment of UL44 to subnuclear sites for viral replication.

It localises to the host nucleus. Its subcellular location is the virion. Needed for efficient replication. Recruits the DNA polymerase processivity factor to pre-replication foci. This chain is Early phosphoprotein p84 (UL112/UL113), found in Homo sapiens (Human).